The chain runs to 169 residues: uncharacterized protein (169 aa).

This is an uncharacterized protein from Buchnera aphidicola subsp. Acyrthosiphon pisum (strain APS) (Acyrthosiphon pisum symbiotic bacterium).